The following is a 491-amino-acid chain: UDP-N-acetylmuramoyl-L-alanyl-D-glutamate--2,6-diaminopimelate ligase (491 aa).

Ser-30 contacts UDP-N-acetyl-alpha-D-muramoyl-L-alanyl-D-glutamate. Residue 108 to 114 (GTNGKTT) participates in ATP binding. Residues Asn-149, 150–151 (TT), Ser-177, and Arg-185 contribute to the UDP-N-acetyl-alpha-D-muramoyl-L-alanyl-D-glutamate site. Residue Lys-217 is modified to N6-carboxylysine. Residues Arg-383, 407 to 410 (DNPR), Gly-457, and Glu-461 contribute to the meso-2,6-diaminopimelate site. The Meso-diaminopimelate recognition motif signature appears at 407 to 410 (DNPR).

This sequence belongs to the MurCDEF family. MurE subfamily. The cofactor is Mg(2+). In terms of processing, carboxylation is probably crucial for Mg(2+) binding and, consequently, for the gamma-phosphate positioning of ATP.

It is found in the cytoplasm. The enzyme catalyses UDP-N-acetyl-alpha-D-muramoyl-L-alanyl-D-glutamate + meso-2,6-diaminopimelate + ATP = UDP-N-acetyl-alpha-D-muramoyl-L-alanyl-gamma-D-glutamyl-meso-2,6-diaminopimelate + ADP + phosphate + H(+). Its pathway is cell wall biogenesis; peptidoglycan biosynthesis. Functionally, catalyzes the addition of meso-diaminopimelic acid to the nucleotide precursor UDP-N-acetylmuramoyl-L-alanyl-D-glutamate (UMAG) in the biosynthesis of bacterial cell-wall peptidoglycan. In Bacillus cereus (strain ATCC 14579 / DSM 31 / CCUG 7414 / JCM 2152 / NBRC 15305 / NCIMB 9373 / NCTC 2599 / NRRL B-3711), this protein is UDP-N-acetylmuramoyl-L-alanyl-D-glutamate--2,6-diaminopimelate ligase.